The chain runs to 238 residues: Leucyl/phenylalanyl-tRNA--protein transferase (238 aa).

Belongs to the L/F-transferase family.

It localises to the cytoplasm. The enzyme catalyses N-terminal L-lysyl-[protein] + L-leucyl-tRNA(Leu) = N-terminal L-leucyl-L-lysyl-[protein] + tRNA(Leu) + H(+). It carries out the reaction N-terminal L-arginyl-[protein] + L-leucyl-tRNA(Leu) = N-terminal L-leucyl-L-arginyl-[protein] + tRNA(Leu) + H(+). The catalysed reaction is L-phenylalanyl-tRNA(Phe) + an N-terminal L-alpha-aminoacyl-[protein] = an N-terminal L-phenylalanyl-L-alpha-aminoacyl-[protein] + tRNA(Phe). Its function is as follows. Functions in the N-end rule pathway of protein degradation where it conjugates Leu, Phe and, less efficiently, Met from aminoacyl-tRNAs to the N-termini of proteins containing an N-terminal arginine or lysine. This is Leucyl/phenylalanyl-tRNA--protein transferase from Psychromonas ingrahamii (strain DSM 17664 / CCUG 51855 / 37).